We begin with the raw amino-acid sequence, 138 residues long: ATP synthase epsilon chain (138 aa).

The protein belongs to the ATPase epsilon chain family. F-type ATPases have 2 components, CF(1) - the catalytic core - and CF(0) - the membrane proton channel. CF(1) has five subunits: alpha(3), beta(3), gamma(1), delta(1), epsilon(1). CF(0) has three main subunits: a, b and c.

It localises to the cell membrane. In terms of biological role, produces ATP from ADP in the presence of a proton gradient across the membrane. This is ATP synthase epsilon chain from Polynucleobacter asymbioticus (strain DSM 18221 / CIP 109841 / QLW-P1DMWA-1) (Polynucleobacter necessarius subsp. asymbioticus).